The chain runs to 238 residues: Ribonuclease PH (238 aa).

Residues Arg-86 and 124–126 (GTR) each bind phosphate.

This sequence belongs to the RNase PH family. In terms of assembly, homohexameric ring arranged as a trimer of dimers.

The enzyme catalyses tRNA(n+1) + phosphate = tRNA(n) + a ribonucleoside 5'-diphosphate. Its function is as follows. Phosphorolytic 3'-5' exoribonuclease that plays an important role in tRNA 3'-end maturation. Removes nucleotide residues following the 3'-CCA terminus of tRNAs; can also add nucleotides to the ends of RNA molecules by using nucleoside diphosphates as substrates, but this may not be physiologically important. Probably plays a role in initiation of 16S rRNA degradation (leading to ribosome degradation) during starvation. The protein is Ribonuclease PH of Marinobacter nauticus (strain ATCC 700491 / DSM 11845 / VT8) (Marinobacter aquaeolei).